Here is a 319-residue protein sequence, read N- to C-terminus: MKGVFSLNYKPKALNKGDTVGVIAPASPPDPKKLDTALLFLEELGLQVKLGKALKNQHGYLAGQDDERLADLHEMFRDDEVKAVLCACGGFGTGRIAAGIDFSLIRKHPKIFWGYSDITFLHTAIHQNTGLVTFHGPMLSTDIGLDDVHPLTKASYKQLFQETEFTYTEELSPLTELVPGKAEGELVGGNLSLLTSTLGTPFEIDTRGKLLFIEDIDEEPYQIDRMLNQLKMGGKLTDAAGILVCDFHNCVPVKREKSLSLEQVLEDYIISAGRPALRGFKIGHCSPSIAVPIGAKAAMNTAEKTAVIEAGVSEGALKT.

Residue serine 116 is the Nucleophile of the active site. Catalysis depends on charge relay system residues glutamate 214 and histidine 284.

The protein belongs to the peptidase S66 family.

Its subcellular location is the cytoplasm. Its pathway is cell wall degradation; peptidoglycan degradation. Functionally, may be involved in the degradation of peptidoglycan by catalyzing the cleavage of the terminal D-alanine residue from cytoplasmic murein peptides. This Bacillus subtilis (strain 168) protein is Probable murein peptide carboxypeptidase (ykfA).